The sequence spans 256 residues: Protein FixA (256 aa).

This sequence belongs to the ETF beta-subunit/FixA family. As to quaternary structure, heterodimer of FixA and FixB.

Its pathway is amine and polyamine metabolism; carnitine metabolism. In terms of biological role, required for anaerobic carnitine reduction. May bring reductant to CaiA. The chain is Protein FixA from Escherichia coli O139:H28 (strain E24377A / ETEC).